A 190-amino-acid polypeptide reads, in one-letter code: 3-isopropylmalate dehydratase small subunit (190 aa).

It belongs to the LeuD family. LeuD type 1 subfamily. Heterodimer of LeuC and LeuD.

It catalyses the reaction (2R,3S)-3-isopropylmalate = (2S)-2-isopropylmalate. The protein operates within amino-acid biosynthesis; L-leucine biosynthesis; L-leucine from 3-methyl-2-oxobutanoate: step 2/4. In terms of biological role, catalyzes the isomerization between 2-isopropylmalate and 3-isopropylmalate, via the formation of 2-isopropylmaleate. The polypeptide is 3-isopropylmalate dehydratase small subunit (Staphylococcus aureus (strain USA300)).